Reading from the N-terminus, the 651-residue chain is Acetyl-coenzyme A synthetase (651 aa).

CoA-binding positions include 189-192, Thr311, and Asn335; that span reads RGGK. ATP is bound by residues 387–389, 411–416, Asp500, and Arg515; these read GEP and DTWWQT. Residue Ser523 participates in CoA binding. ATP is bound at residue Arg526. 3 residues coordinate Mg(2+): Val537, His539, and Val542. Position 584 (Arg584) interacts with CoA. Lys609 is modified (N6-acetyllysine).

This sequence belongs to the ATP-dependent AMP-binding enzyme family. Mg(2+) is required as a cofactor. Post-translationally, acetylated. Deacetylation by the SIR2-homolog deacetylase activates the enzyme.

The enzyme catalyses acetate + ATP + CoA = acetyl-CoA + AMP + diphosphate. Functionally, catalyzes the conversion of acetate into acetyl-CoA (AcCoA), an essential intermediate at the junction of anabolic and catabolic pathways. AcsA undergoes a two-step reaction. In the first half reaction, AcsA combines acetate with ATP to form acetyl-adenylate (AcAMP) intermediate. In the second half reaction, it can then transfer the acetyl group from AcAMP to the sulfhydryl group of CoA, forming the product AcCoA. This is Acetyl-coenzyme A synthetase from Agrobacterium fabrum (strain C58 / ATCC 33970) (Agrobacterium tumefaciens (strain C58)).